Reading from the N-terminus, the 471-residue chain is 6-phosphofructo-2-kinase/fructose-2,6-bisphosphatase 1 (471 aa).

An N-acetylserine modification is found at Ser-2. The 6-phosphofructo-2-kinase stretch occupies residues 2 to 250 (SREMGELTQT…AYYLMNIHVT (249 aa)). Ser-33 carries the phosphoserine; by PKA modification. Residue 49 to 57 (GLPARGKTY) coordinates ATP. Positions 82 and 105 each coordinate beta-D-fructose 6-phosphate. Residue Asp-131 is part of the active site. Thr-133 and Arg-139 together coordinate beta-D-fructose 6-phosphate. The residue at position 141 (Ser-141) is a Phosphoserine. Cys-161 is a catalytic residue. 170-175 (NIKQVK) contributes to the ATP binding site. The beta-D-fructose 6-phosphate site is built by Lys-175, Arg-196, and Tyr-200. The fructose-2,6-bisphosphatase stretch occupies residues 251-471 (PRSIYLCRHG…EALDTVPAHY (221 aa)). Arg-258 lines the beta-D-fructose 2,6-bisphosphate pocket. His-259 functions as the Tele-phosphohistidine intermediate in the catalytic mechanism. Beta-D-fructose 2,6-bisphosphate-binding residues include Asn-265, Gly-271, and Arg-308. Glu-328 (proton donor/acceptor) is an active-site residue. Residues Tyr-339, Arg-353, Lys-357, Tyr-368, Gln-394, and Arg-398 each coordinate beta-D-fructose 2,6-bisphosphate. ATP is bound at residue 350–353 (FALR). Residues 394 to 398 (QAVMR) and Tyr-430 contribute to the ATP site.

The protein in the C-terminal section; belongs to the phosphoglycerate mutase family. As to quaternary structure, homodimer. As to expression, liver.

It catalyses the reaction beta-D-fructose 2,6-bisphosphate + H2O = beta-D-fructose 6-phosphate + phosphate. It carries out the reaction beta-D-fructose 6-phosphate + ATP = beta-D-fructose 2,6-bisphosphate + ADP + H(+). With respect to regulation, phosphorylation at Ser-33 inhibits the kinase and activates the bisphosphatase. In terms of biological role, synthesis and degradation of fructose 2,6-bisphosphate. In Mus musculus (Mouse), this protein is 6-phosphofructo-2-kinase/fructose-2,6-bisphosphatase 1.